Consider the following 240-residue polypeptide: Cysteine-rich venom protein (240 aa).

Positions 1–19 are cleaved as a signal peptide; that stretch reads MIAFIVLPILAAVLQQSSG. One can recognise an SCP domain in the interval 39 to 166; that stretch reads DLHNSLRRSV…EYSYFYVCQY (128 aa). 8 cysteine pairs are disulfide-bonded: C75–C153, C92–C167, C148–C164, C186–C193, C189–C198, C202–C235, C211–C229, and C220–C233. The region spanning 202-235 is the ShKT domain; sequence CRQENKFTNCDSLVRQSSCQDNYMKTNCPASCFC.

Belongs to the CRISP family. Expressed by the venom gland.

The protein resides in the secreted. Blocks contraction of smooth muscle elicited by high potassium-induced depolarization, but does not block caffeine-stimulated contraction. May target voltage-gated calcium channels on smooth muscle. This Protobothrops jerdonii (Jerdon's pitviper) protein is Cysteine-rich venom protein.